A 271-amino-acid chain; its full sequence is Putative phosphoenolpyruvate synthase regulatory protein (271 aa).

Residue 151–158 coordinates ADP; sequence GVSRSGKT.

Belongs to the pyruvate, phosphate/water dikinase regulatory protein family. PSRP subfamily.

It catalyses the reaction [pyruvate, water dikinase] + ADP = [pyruvate, water dikinase]-phosphate + AMP + H(+). The enzyme catalyses [pyruvate, water dikinase]-phosphate + phosphate + H(+) = [pyruvate, water dikinase] + diphosphate. Bifunctional serine/threonine kinase and phosphorylase involved in the regulation of the phosphoenolpyruvate synthase (PEPS) by catalyzing its phosphorylation/dephosphorylation. The polypeptide is Putative phosphoenolpyruvate synthase regulatory protein (Burkholderia thailandensis (strain ATCC 700388 / DSM 13276 / CCUG 48851 / CIP 106301 / E264)).